A 776-amino-acid polypeptide reads, in one-letter code: DExH-box ATP-dependent RNA helicase DExH18, mitochondrial (776 aa).

The transit peptide at 1–84 (MARGVAGVLR…RSFSSTVDNN (84 aa)) directs the protein to the mitochondrion. The disordered stretch occupies residues 80–101 (TVDNNGENDDIEESVGSESDDY). Residues 85-101 (GENDDIEESVGSESDDY) show a composition bias toward acidic residues. Residues 268-426 (FARAMKRKIV…RFKPLVVEAK (159 aa)) enclose the Helicase ATP-binding domain. 281–288 (GPTNSGKT) is a binding site for ATP. The short motif at 361–364 (DEIQ) is the DEIH box; degenerate element. A Helicase C-terminal domain is found at 427-595 (TLLGELKNVK…LFAAQVPDMA (169 aa)).

The protein belongs to the DExH box helicase family. In terms of assembly, homodimer; in free form. Component of the mitochondrial degradosome (mtEXO) complex which is a heteropentamer containing 2 copies of SUPV3L1 and 3 copies of PNPT1. Requires Mg(2+) as cofactor. The cofactor is Mn(2+).

Its subcellular location is the nucleus. It is found in the mitochondrion matrix. It localises to the mitochondrion nucleoid. The enzyme catalyses ATP + H2O = ADP + phosphate + H(+). Major helicase player in mitochondrial RNA metabolism. Component of the mitochondrial degradosome (mtEXO) complex, that degrades 3' overhang double-stranded RNA with a 3'-to-5' directionality in an ATP-dependent manner. ATPase and ATP-dependent multisubstrate helicase, able to unwind double-stranded (ds) DNA and RNA, and RNA/DNA heteroduplexes in the 5'-to-3' direction. Plays a role in the RNA surveillance system in mitochondria; regulates the stability of mature mRNAs, the removal of aberrantly formed mRNAs and the rapid degradation of non coding processing intermediates. The sequence is that of DExH-box ATP-dependent RNA helicase DExH18, mitochondrial from Arabidopsis thaliana (Mouse-ear cress).